Here is a 404-residue protein sequence, read N- to C-terminus: F-box protein At3g57590 (404 aa).

In terms of domain architecture, F-box spans 1-47 (MEPIPNDLILEIFSRLPAKSVIGFRTLSKHWASILRSPVFTELFLTR).

The sequence is that of F-box protein At3g57590 from Arabidopsis thaliana (Mouse-ear cress).